The following is a 442-amino-acid chain: ATP-dependent RNA helicase SUB2-2 (442 aa).

Positions 58–86 match the Q motif motif; sequence TGFKDFLLKPELARAIIDCGFEHPSEVQQ. Residues 89-264 form the Helicase ATP-binding domain; it reads IPQSIHGTDV…RRFLQNPLEI (176 aa). Residue 102 to 109 coordinates ATP; the sequence is AKSGLGKT. Residues 211–214 carry the DECD box motif; the sequence is DECD. One can recognise a Helicase C-terminal domain in the interval 292-437; the sequence is KLAQLLDDLE…EFPEEGIDPS (146 aa).

It belongs to the DEAD box helicase family. DECD subfamily.

The protein localises to the nucleus. The enzyme catalyses ATP + H2O = ADP + phosphate + H(+). In terms of biological role, ATP-binding RNA helicase involved in transcription elongation and required for the export of mRNA out of the nucleus. SUB2 also plays a role in pre-mRNA splicing and spliceosome assembly. May be involved in rDNA and telomeric silencing, and maintenance of genome integrity. This Vanderwaltozyma polyspora (strain ATCC 22028 / DSM 70294 / BCRC 21397 / CBS 2163 / NBRC 10782 / NRRL Y-8283 / UCD 57-17) (Kluyveromyces polysporus) protein is ATP-dependent RNA helicase SUB2-2 (SUB2-2).